Here is a 956-residue protein sequence, read N- to C-terminus: Angiomotin-like protein 1 (956 aa).

Positions 197 to 246 are disordered; the sequence is QSQFFRGQQQQQQQQGAVGHGYYMAGGTSQKSRTEGRPTVNRANSGQAHK. Phosphoserine occurs at positions 241 and 269. Positions 259 to 279 form a coiled coil; that stretch reads RSLSERIMQLSLERNGAKQHL. 3 disordered regions span residues 274–322, 382–405, and 411–430; these read GAKQ…QMMS, PSTM…LHSV, and LPMA…SQQL. Over residues 282–294 the composition is skewed to gly residues; it reads SGNGKGFKVGGGP. Ser-295 is subject to Phosphoserine. Polar residues predominate over residues 382–398; sequence PSTMQQHSPMSSQTSSA. Coiled-coil stretches lie at residues 438–639 and 665–694; these read VERA…WLER and ALLE…YLEE. Ser-720 carries the phosphoserine modification. The stretch at 729–762 forms a coiled coil; that stretch reads SLEAHIWQEEEEVVQANRRCQDMEYTIKNLHAKI. The segment at 773–823 is disordered; that stretch reads QQRSRKDAGKTDSSSLRPARSVPSIAAATGTHSRQTSLTSSQLAEEKKEEK. 3 positions are modified to phosphoserine: Ser-793, Ser-805, and Ser-828. A compositionally biased stretch (polar residues) spans 802–815; it reads GTHSRQTSLTSSQL. Disordered regions lie at residues 841 to 880 and 894 to 944; these read ASAP…TQTD and PSRG…LHKP. Residues 852-866 are compositionally biased toward low complexity; sequence SALSSIASTTAASSA. Position 900 is a phosphoserine (Ser-900). Thr-902 carries the post-translational modification Phosphothreonine. Position 906 is a phosphoserine (Ser-906). A PDZ-binding motif is present at residues 953–956; sequence EVLI.

This sequence belongs to the angiomotin family. Post-translationally, polyubiquitinated by NEDD4, leading to proteasomal degradation.

Its subcellular location is the cell junction. It localises to the tight junction. Its function is as follows. Inhibits the Wnt/beta-catenin signaling pathway, probably by recruiting CTNNB1 to recycling endosomes and hence preventing its translocation to the nucleus. This chain is Angiomotin-like protein 1 (AMOTL1), found in Homo sapiens (Human).